We begin with the raw amino-acid sequence, 584 residues long: Mitochondrial sodium/calcium exchanger protein (584 aa).

The signal sequence occupies residues methionine 1 to glycine 26. Residues threonine 27–leucine 95 lie on the Extracellular side of the membrane. Asparagine 60 is a glycosylation site (N-linked (GlcNAc...) asparagine). A helical transmembrane segment spans residues leucine 96–valine 116. Over threonine 117–alanine 140 the chain is Cytoplasmic. Residues glycine 141–phenylalanine 161 traverse the membrane as a helical segment. Over serine 162–glycine 168 the chain is Extracellular. Residues leucine 169 to isoleucine 189 traverse the membrane as a helical segment. The Cytoplasmic portion of the chain corresponds to threonine 190 to arginine 200. A helical transmembrane segment spans residues proline 201–phenylalanine 221. The Extracellular portion of the chain corresponds to arginine 222–threonine 226. A helical membrane pass occupies residues leucine 227–cysteine 247. The Cytoplasmic segment spans residues threonine 248–lysine 325. At serine 258 the chain carries Phosphoserine; by PKA. Residues alanine 326–aspartate 346 traverse the membrane as a helical segment. At proline 347–cysteine 360 the chain is on the extracellular side. A helical membrane pass occupies residues leucine 361–valine 381. Topologically, residues tyrosine 382–glutamate 383 are cytoplasmic. The chain crosses the membrane as a helical span at residues isoleucine 384–valine 404. At threonine 405–arginine 416 the chain is on the extracellular side. The helical transmembrane segment at leucine 417–alanine 437 threads the bilayer. Residues threonine 438–arginine 445 are Cytoplasmic-facing. Residues serine 446 to glycine 466 form a helical membrane-spanning segment. The Extracellular portion of the chain corresponds to asparagine 467–alanine 487. The chain crosses the membrane as a helical span at residues phenylalanine 488–leucine 508. The Cytoplasmic portion of the chain corresponds to leucine 509–glycine 524. Residues leucine 525–valine 545 traverse the membrane as a helical segment. Residues proline 546–phenylalanine 558 are Extracellular-facing. A helical transmembrane segment spans residues cysteine 559–isoleucine 579. The Cytoplasmic segment spans residues histidine 580–methionine 584.

Belongs to the Ca(2+):cation antiporter (CaCA) (TC 2.A.19) family. SLC24A subfamily. In terms of processing, phosphorylation at Ser-258 by PKA prevents calcium overload. Present in pancreatic beta-cells (at protein level).

Its subcellular location is the mitochondrion inner membrane. It carries out the reaction Ca(2+)(in) + 3 Na(+)(out) = Ca(2+)(out) + 3 Na(+)(in). The enzyme catalyses 3 Li(+)(out) + Ca(2+)(in) = 3 Li(+)(in) + Ca(2+)(out). With respect to regulation, inhibited by the sodium/calcium exchanger inhibitor CGP-37157. Strongly inhibited by zinc. In terms of biological role, mitochondrial sodium/calcium antiporter that mediates sodium-dependent calcium efflux from mitochondrion, by mediating the exchange of 3 sodium ions per 1 calcium ion. Plays a central role in mitochondrial calcium homeostasis by mediating mitochondrial calcium extrusion: calcium efflux is essential for mitochondrial function and cell survival, notably in cardiomyocytes. Regulates rates of glucose-dependent insulin secretion in pancreatic beta-cells during the first phase of insulin secretion: acts by mediating efflux of calcium from mitochondrion, thereby affecting cytoplasmic calcium responses. Required for store-operated Ca(2+) entry (SOCE) and Ca(2+) release-activated Ca(2+) (CRAC) channel regulation: sodium transport by SLC8B1 leads to promote calcium-shuttling that modulates mitochondrial redox status, thereby regulating SOCE activity. Involved in B-lymphocyte chemotaxis. Able to transport Ca(2+) in exchange of either Li(+) or Na(+), explaining how Li(+) catalyzes Ca(2+) exchange. In contrast to other members of the family its function is independent of K(+). This chain is Mitochondrial sodium/calcium exchanger protein, found in Homo sapiens (Human).